We begin with the raw amino-acid sequence, 365 residues long: Prostaglandin E2 receptor EP3 subtype (365 aa).

The segment at 1–22 (MASMWAPEHSAEAHSNLSSTTD) is disordered. Residues 1–30 (MASMWAPEHSAEAHSNLSSTTDDCGSVSVA) lie on the Extracellular side of the membrane. Positions 13-22 (AHSNLSSTTD) are enriched in polar residues. Asparagine 16 carries an N-linked (GlcNAc...) asparagine glycan. The chain crosses the membrane as a helical span at residues 31–55 (FPITMMVTGFVGNALAMLLVSRSYR). The Cytoplasmic portion of the chain corresponds to 56-68 (RRESKRKKSFLLC). The helical transmembrane segment at 69-89 (IGWLALTDLVGQLLTSPVVIL) threads the bilayer. The Extracellular segment spans residues 90 to 108 (VYLSQRRWEQLDPSGRLCT). Cysteine 107 and cysteine 184 are disulfide-bonded. A helical transmembrane segment spans residues 109–130 (FFGLTMTVFGLSSLLVASAMAV). Over 131–151 (ERALAIRAPHWYASHMKTRAT) the chain is Cytoplasmic. Residues 152 to 173 (PVLLGVWLSVLAFALLPVLGVG) traverse the membrane as a helical segment. Residues 174–203 (RYSVQWPGTWCFISTGPAGNETDPAREPGS) lie on the Extracellular side of the membrane. N-linked (GlcNAc...) asparagine glycosylation is present at asparagine 193. Residues 204 to 229 (VAFASAFACLGLLALVVTFACNLATI) form a helical membrane-spanning segment. The Cytoplasmic portion of the chain corresponds to 230-259 (KALVSRCRAKAAVSQSSAQWGRITTETAIQ). The chain crosses the membrane as a helical span at residues 260–283 (LMGIMCVLSVCWSPLLIMMLKMIF). Residues 284 to 303 (NQMSVEQCKTQMGKEKECNS) lie on the Extracellular side of the membrane. A helical transmembrane segment spans residues 304–325 (FLIAVRLASLNQILDPWVYLLL). Over 326–365 (RKILLRKFCQIRDHTNYASSSTSLPCPGSSALMWSDQLER) the chain is Cytoplasmic.

The protein belongs to the G-protein coupled receptor 1 family. In terms of assembly, interacts (via C-terminus) with MKLN1. Post-translationally, ligand binding is affected by cAMP-dependent phosphorylation in brain membranes. As to expression, detected in platelets. Kidney, uterus, and mastocytoma cells, and in a lesser amount in brain, thymus, lung, heart, stomach and spleen.

The protein resides in the cell membrane. Functionally, receptor for prostaglandin E2 (PGE2). Required for normal development of fever in response to pyrinogens, including IL1B, prostaglandin E2 and bacterial lipopolysaccharide (LPS). Required for normal potentiation of platelet aggregation by prostaglandin E2, and thus plays a role in the regulation of blood coagulation. Required for increased HCO3(-) secretion in the duodenum in response to mucosal acidification, and thereby contributes to the protection of the mucosa against acid-induced ulceration. Not required for normal kidney function, normal urine volume and osmolality. Receptor for prostaglandin E2 (PGE2); ligand binding activates a signaling cascade via G(i) proteins that leads to inhibition of adenylate cyclase. Shows high agonist-independent constitutive inhibition of adenylate cyclase. Its function is as follows. Receptor for prostaglandin E2 (PGE2); ligand binding activates a signaling cascade via G(i) proteins that leads to inhibition of adenylate cyclase. Requires much higher ligand concentrations than isoform Alpha for activation. Does not display agonist-independent constitutive inhibition of adenylate cyclase. In terms of biological role, receptor for prostaglandin E2 (PGE2); ligand binding can activate several distinct signaling cascades, resulting in activation or inhibition of adenylate cyclase. The protein is Prostaglandin E2 receptor EP3 subtype (Ptger3) of Mus musculus (Mouse).